Consider the following 721-residue polypeptide: Peptide-N(4)-(N-acetyl-beta-glucosaminyl)asparagine amidase (721 aa).

Zn(2+) contacts are provided by C193, C196, C225, and C228. Catalysis depends on C251, which acts as the Nucleophile. Active-site residues include H278 and D295.

It belongs to the transglutaminase-like superfamily. PNGase family. It depends on Zn(2+) as a cofactor.

The protein resides in the cytoplasm. It catalyses the reaction Hydrolysis of an N(4)-(acetyl-beta-D-glucosaminyl)asparagine residue in which the glucosamine residue may be further glycosylated, to yield a (substituted) N-acetyl-beta-D-glucosaminylamine and a peptide containing an aspartate residue.. Its function is as follows. Specifically deglycosylates the denatured form of N-linked glycoproteins in the cytoplasm and assists their proteasome-mediated degradation. Cleaves the beta-aspartyl-glucosamine (GlcNAc) of the glycan and the amide side chain of Asn, converting Asn to Asp. Prefers proteins containing high-mannose over those bearing complex type oligosaccharides. Can recognize misfolded proteins in the endoplasmic reticulum that are exported to the cytosol to be destroyed and deglycosylate them, while it has no activity toward native proteins. Deglycosylation is a prerequisite for subsequent proteasome-mediated degradation of some, but not all, misfolded glycoproteins. The sequence is that of Peptide-N(4)-(N-acetyl-beta-glucosaminyl)asparagine amidase (PNG1) from Arabidopsis thaliana (Mouse-ear cress).